Reading from the N-terminus, the 898-residue chain is DNA mismatch repair protein MutS (898 aa).

ATP is bound at residue 646-653 (GPNMGGKS).

The protein belongs to the DNA mismatch repair MutS family.

In terms of biological role, this protein is involved in the repair of mismatches in DNA. It is possible that it carries out the mismatch recognition step. This protein has a weak ATPase activity. The polypeptide is DNA mismatch repair protein MutS (Brucella ovis (strain ATCC 25840 / 63/290 / NCTC 10512)).